The sequence spans 460 residues: MCYNMDMTNFKKNDIFEAEVLDLTHEGQGVVKIDSFPFFVDNALPGERIKMHVLKVGKSFGFGRVDEFISQSKHRVTQLNLDYLRTGIADFGHLSYDEQVKFKHKQVVDILRKTAGKSDYPVLPVVEAIKTINYRNKAQIPVQMVDGLLTTGFYRKNSHTLIPVEDFYIQHPEIDAVVLFLRDEFRKINLQAYDEKTRKGWLRNIVVRRAFHTGEMMITLVVTSKKLPEKVELVIDHLVERFTNIKSVQLNINSGTGSFILGKEFILLYGKDFITDLMLDKTYQISAPAFYQVNTPQAEKLYETAYEFAGLKPGDVVIDAYSGIGTIGISMADRVAKVYGMEVVPAAVENAKRNAQLNELENTHYEVGTAEKIMPKWLSEGIKPDVIFVDPPRKGLDEGFIKAAAMMNPRRIVYISCNPATFARDVVRFEADGYLLDKVQPVDLFPQTHHIELVASFNKK.

The TRAM domain maps to 9-67 (NFKKNDIFEAEVLDLTHEGQGVVKIDSFPFFVDNALPGERIKMHVLKVGKSFGFGRVDE). Residues Gln292, Tyr321, Glu342, and Asp390 each contribute to the S-adenosyl-L-methionine site. Cys417 serves as the catalytic Nucleophile.

The protein belongs to the class I-like SAM-binding methyltransferase superfamily. RNA M5U methyltransferase family.

This is an uncharacterized protein from Lactococcus lactis subsp. lactis (strain IL1403) (Streptococcus lactis).